Reading from the N-terminus, the 179-residue chain is Probable WRKY transcription factor 24 (179 aa).

A DNA-binding region (WRKY) is located at residues 92–157 (SDDDVLDDGY…YEGVHNHPCE (66 aa)).

This sequence belongs to the WRKY group II-c family.

The protein localises to the nucleus. In terms of biological role, transcription factor. Interacts specifically with the W box (5'-(T)TGAC[CT]-3'), a frequently occurring elicitor-responsive cis-acting element. This chain is Probable WRKY transcription factor 24 (WRKY24), found in Arabidopsis thaliana (Mouse-ear cress).